We begin with the raw amino-acid sequence, 249 residues long: Secreted flagellin C (249 aa).

As to quaternary structure, interacts with FliS.

It localises to the secreted. Its function is as follows. Might play a role in virulence. This chain is Secreted flagellin C (flaC), found in Campylobacter jejuni subsp. jejuni serotype O:6 (strain 81116 / NCTC 11828).